The following is a 121-amino-acid chain: MRNWRWLLLVLAVLLAWLQYRFWFGPGNSGEVMMLEAQVAHQTRDNEGLRQRNQALAAEVKDLKDGEAAIEERARSELGMIKPGETFYRVVEDAPLLPPAAQEAAPPAQPPAASADPVDHP.

The Cytoplasmic portion of the chain corresponds to 1–6 (MRNWRW). Residues 7-24 (LLLVLAVLLAWLQYRFWF) form a helical membrane-spanning segment. The Periplasmic segment spans residues 25-121 (GPGNSGEVMM…AASADPVDHP (97 aa)). A coiled-coil region spans residues 31–66 (EVMMLEAQVAHQTRDNEGLRQRNQALAAEVKDLKDG). Positions 98–121 (PPAAQEAAPPAQPPAASADPVDHP) are disordered.

This sequence belongs to the FtsB family. Part of a complex composed of FtsB, FtsL and FtsQ.

Its subcellular location is the cell inner membrane. Essential cell division protein. May link together the upstream cell division proteins, which are predominantly cytoplasmic, with the downstream cell division proteins, which are predominantly periplasmic. In Xanthomonas campestris pv. campestris (strain 8004), this protein is Cell division protein FtsB.